A 599-amino-acid chain; its full sequence is Elongation factor 4 (599 aa).

The 183-residue stretch at 5 to 187 (STIRNFAIIA…AIVHRLPAPV (183 aa)) folds into the tr-type G domain. Residues 17–22 (DHGKST) and 134–137 (NKAD) contribute to the GTP site.

The protein belongs to the TRAFAC class translation factor GTPase superfamily. Classic translation factor GTPase family. LepA subfamily.

It localises to the cell inner membrane. The catalysed reaction is GTP + H2O = GDP + phosphate + H(+). Required for accurate and efficient protein synthesis under certain stress conditions. May act as a fidelity factor of the translation reaction, by catalyzing a one-codon backward translocation of tRNAs on improperly translocated ribosomes. Back-translocation proceeds from a post-translocation (POST) complex to a pre-translocation (PRE) complex, thus giving elongation factor G a second chance to translocate the tRNAs correctly. Binds to ribosomes in a GTP-dependent manner. This is Elongation factor 4 from Anaplasma marginale (strain Florida).